The following is a 38-amino-acid chain: Large ribosomal subunit protein bL36 (38 aa).

This sequence belongs to the bacterial ribosomal protein bL36 family.

In Sorangium cellulosum (strain So ce56) (Polyangium cellulosum (strain So ce56)), this protein is Large ribosomal subunit protein bL36.